Here is a 210-residue protein sequence, read N- to C-terminus: HTH-type transcriptional repressor FabR (210 aa).

The HTH tetR-type domain occupies 10-70; the sequence is KTRRSLVEAA…TMVDESGLML (61 aa). Positions 33-52 form a DNA-binding region, H-T-H motif; the sequence is SLREVAREAGIAPTSFYRHF.

In terms of assembly, homodimer.

Its subcellular location is the cytoplasm. In terms of biological role, represses the transcription of fabB, involved in unsaturated fatty acid (UFA) biosynthesis. By controlling UFA production, FabR directly influences the physical properties of the membrane bilayer. In Salmonella paratyphi A (strain ATCC 9150 / SARB42), this protein is HTH-type transcriptional repressor FabR.